We begin with the raw amino-acid sequence, 238 residues long: Probable transcriptional regulatory protein STER_0242 (238 aa).

It belongs to the TACO1 family. YeeN subfamily.

It is found in the cytoplasm. The polypeptide is Probable transcriptional regulatory protein STER_0242 (Streptococcus thermophilus (strain ATCC BAA-491 / LMD-9)).